The sequence spans 793 residues: Protocadherin beta-7 (793 aa).

Residues 1–26 (MEARVERAVQKRQVLFLCVFLGMSWA) form the signal peptide. Residues 27 to 688 (GAEPLRYFVA…DQANLLTVYL (662 aa)) lie on the Extracellular side of the membrane. Cadherin domains follow at residues 35–133 (VAEE…APVF), 138–242 (ISLK…APDF), 247–347 (YKVQ…RPEL), 352–451 (LTSP…APAF), and 456–561 (YTLF…SPFV). Asn-169 is a glycosylation site (N-linked (GlcNAc...) asparagine). 2 N-linked (GlcNAc...) asparagine glycosylation sites follow: Asn-418 and Asn-436. N-linked (GlcNAc...) asparagine glycosylation occurs at Asn-567. A Cadherin 6 domain is found at 568–671 (SSAPCTEPLP…LVDGFSQPYL (104 aa)). A helical transmembrane segment spans residues 689–709 (VVALASVSSLFLLSVLLFVAV). Over 710 to 793 (RLCRRSRAAP…NRPFQNNLGF (84 aa)) the chain is Cytoplasmic.

It is found in the cell membrane. Functionally, potential calcium-dependent cell-adhesion protein. May be involved in the establishment and maintenance of specific neuronal connections in the brain. This Pan troglodytes (Chimpanzee) protein is Protocadherin beta-7 (PCDHB7).